The chain runs to 240 residues: Phosducin-like protein 2 (240 aa).

The region spanning 38–201 (QQEAMVKPYE…LEWKLSEVGA (164 aa)) is the Phosducin domain. The thioredoxin fold stretch occupies residues 89–240 (FGELREISGN…DSSGSDTEAK (152 aa)).

It belongs to the phosducin family. Interacts with the CCT chaperonin complex and actin. As to expression, testis-specific (at protein level).

Its subcellular location is the endoplasmic reticulum. In terms of biological role, essential for male fertility, spermiogenesis and acrosome formation. The chain is Phosducin-like protein 2 (Pdcl2) from Mus musculus (Mouse).